The chain runs to 384 residues: Succinyl-diaminopimelate desuccinylase (384 aa).

Histidine 71 is a Zn(2+) binding site. Aspartate 73 is an active-site residue. Residue aspartate 104 participates in Zn(2+) binding. Catalysis depends on glutamate 139, which acts as the Proton acceptor. Residues glutamate 140, glutamate 168, and histidine 357 each contribute to the Zn(2+) site.

Belongs to the peptidase M20A family. DapE subfamily. Homodimer. Zn(2+) is required as a cofactor. Requires Co(2+) as cofactor.

The enzyme catalyses N-succinyl-(2S,6S)-2,6-diaminopimelate + H2O = (2S,6S)-2,6-diaminopimelate + succinate. It participates in amino-acid biosynthesis; L-lysine biosynthesis via DAP pathway; LL-2,6-diaminopimelate from (S)-tetrahydrodipicolinate (succinylase route): step 3/3. Functionally, catalyzes the hydrolysis of N-succinyl-L,L-diaminopimelic acid (SDAP), forming succinate and LL-2,6-diaminopimelate (DAP), an intermediate involved in the bacterial biosynthesis of lysine and meso-diaminopimelic acid, an essential component of bacterial cell walls. The sequence is that of Succinyl-diaminopimelate desuccinylase from Bradyrhizobium sp. (strain BTAi1 / ATCC BAA-1182).